We begin with the raw amino-acid sequence, 555 residues long: Genome polyprotein (555 aa).

Residues 1-7 (KHAQRIE) are Extracellular-facing. Residues 8 to 28 (TWILRHPGFTIMAAILAYTIG) traverse the membrane as a helical segment. The Cytoplasmic portion of the chain corresponds to 29–34 (TTHFQR). Residues 35–49 (ALIFILLTAVAPSMT) form a helical membrane-spanning segment. The Extracellular segment spans residues 50–494 (MRCIGISNRD…LHQVFGAIYG (445 aa)). Cystine bridges form between cysteine 52-cysteine 79, cysteine 109-cysteine 170, cysteine 123-cysteine 154, and cysteine 141-cysteine 165. Residue asparagine 116 is glycosylated (N-linked (GlcNAc...) asparagine; by host). The fusion peptide stretch occupies residues 147 to 160 (DRGWGNGCGLFGKG). Residue asparagine 202 is glycosylated (N-linked (GlcNAc...) asparagine; by host). 2 disulfide bridges follow: cysteine 234–cysteine 334 and cysteine 351–cysteine 382. Residues 495 to 515 (AAFSGVSWTMKILIGVIITWI) form a helical membrane-spanning segment. The Cytoplasmic segment spans residues 516-521 (GMNSRS). Residues 522 to 542 (TSLSVSLVLVGIVTLYLEVMV) traverse the membrane as a helical segment. Residues 543 to 555 (QADSGCVVSWKNK) lie on the Extracellular side of the membrane.

As to quaternary structure, homodimer; in the endoplasmic reticulum and Golgi. Interacts with protein prM. Interacts with non-structural protein 1. In terms of assembly, homodimer; Homohexamer when secreted. Interacts with envelope protein E. In terms of processing, N-glycosylated. N-glycosylated. The excreted form is glycosylated and this is required for efficient secretion of the protein from infected cells. Post-translationally, specific enzymatic cleavages in vivo yield mature proteins. Cleavages in the lumen of endoplasmic reticulum are performed by host signal peptidase, wereas cleavages in the cytoplasmic side are performed by serine protease NS3. Signal cleavage at the 2K-4B site requires a prior NS3 protease-mediated cleavage at the 4A-2K site.

The protein localises to the virion membrane. Its subcellular location is the host endoplasmic reticulum membrane. It localises to the secreted. In terms of biological role, may play a role in virus budding. Exerts cytotoxic effects by activating a mitochondrial apoptotic pathway through M ectodomain. May display a viroporin activity. Binds to host cell surface receptor and mediates fusion between viral and cellular membranes. Envelope protein is synthesized in the endoplasmic reticulum in the form of heterodimer with protein prM. They play a role in virion budding in the ER, and the newly formed immature particle is covered with 60 spikes composed of heterodimer between precursor prM and envelope protein E. The virion is transported to the Golgi apparatus where the low pH causes dissociation of PrM-E heterodimers and formation of E homodimers. prM-E cleavage is inefficient, and many virions are only partially matured. These uncleaved prM would play a role in immune evasion. Its function is as follows. Involved in immune evasion, pathogenesis and viral replication. Once cleaved off the polyprotein, is targeted to three destinations: the viral replication cycle, the plasma membrane and the extracellular compartment. Essential for viral replication. Required for formation of the replication complex and recruitment of other non-structural proteins to the ER-derived membrane structures. Excreted as a hexameric lipoparticle that plays a role against host immune response. Antagonizing the complement function. Binds to the host macrophages and dendritic cells. Inhibits signal transduction originating from Toll-like receptor 3 (TLR3). Functionally, disrupts the host endothelial glycocalyx layer of host pulmonary microvascular endothelial cells, inducing degradation of sialic acid and shedding of heparan sulfate proteoglycans. NS1 induces expression of sialidases, heparanase, and activates cathepsin L, which activates heparanase via enzymatic cleavage. These effects are probably linked to the endothelial hyperpermeability observed in severe dengue disease. This is Genome polyprotein from Dengue virus type 2 (strain Thailand/TH-36/1958) (DENV-2).